The sequence spans 225 residues: Cbp/p300-interacting transactivator 2 (225 aa).

It belongs to the CITED family.

The protein resides in the nucleus. In terms of biological role, transcriptional coactivator or corepressor of the p300/CBP-mediated transcription complex. May be involved in sex determination, early gonad development, left-right patterning during embryogenesis and differentiation of the adrenal cortex. In Xenopus laevis (African clawed frog), this protein is Cbp/p300-interacting transactivator 2 (cited2).